The following is a 357-amino-acid chain: DNA replication and repair protein RecF (357 aa).

An ATP-binding site is contributed by 30–37 (GANGSGKT).

This sequence belongs to the RecF family.

It is found in the cytoplasm. Its function is as follows. The RecF protein is involved in DNA metabolism; it is required for DNA replication and normal SOS inducibility. RecF binds preferentially to single-stranded, linear DNA. It also seems to bind ATP. This is DNA replication and repair protein RecF from Shigella dysenteriae serotype 1 (strain Sd197).